The primary structure comprises 273 residues: Probable NAD(P)H dehydrogenase (quinone) FQR1-like 2 (273 aa).

The segment at 1 to 60 is disordered; sequence MGKGGGCVPSKKKKPATTGDGPGIDDDNDATNAPIQIDDDQTTIDGDRTTATNTGGTTTP. Residues 49–60 show a composition bias toward low complexity; that stretch reads TTATNTGGTTTP. Residues 75-263 enclose the Flavodoxin-like domain; the sequence is IFVVFYSMYG…ALAEHQGNYM (189 aa). FMN contacts are provided by residues 81-85, 183-236, and His207; these read SMYGH and FFVS…SPYG. Tyr83 serves as a coordination point for NAD(+).

It belongs to the WrbA family. The cofactor is FMN.

The protein localises to the cell membrane. The enzyme catalyses a quinone + NADH + H(+) = a quinol + NAD(+). The catalysed reaction is a quinone + NADPH + H(+) = a quinol + NADP(+). Catalyzes the transfer of electrons from NADH and NADPH to reduce quinone to the hydroquinone state. This Arabidopsis thaliana (Mouse-ear cress) protein is Probable NAD(P)H dehydrogenase (quinone) FQR1-like 2.